A 126-amino-acid chain; its full sequence is Protein VraC (126 aa).

This Staphylococcus haemolyticus (strain JCSC1435) protein is Protein VraC.